Reading from the N-terminus, the 144-residue chain is 3-hydroxyacyl-[acyl-carrier-protein] dehydratase FabZ (144 aa).

His48 is an active-site residue.

It belongs to the thioester dehydratase family. FabZ subfamily.

It is found in the cytoplasm. The catalysed reaction is a (3R)-hydroxyacyl-[ACP] = a (2E)-enoyl-[ACP] + H2O. Functionally, involved in unsaturated fatty acids biosynthesis. Catalyzes the dehydration of short chain beta-hydroxyacyl-ACPs and long chain saturated and unsaturated beta-hydroxyacyl-ACPs. This Listeria monocytogenes serotype 4b (strain CLIP80459) protein is 3-hydroxyacyl-[acyl-carrier-protein] dehydratase FabZ.